Consider the following 102-residue polypeptide: Small ribosomal subunit protein uS10 (102 aa).

It belongs to the universal ribosomal protein uS10 family. In terms of assembly, part of the 30S ribosomal subunit.

In terms of biological role, involved in the binding of tRNA to the ribosomes. The polypeptide is Small ribosomal subunit protein uS10 (Methylobacterium radiotolerans (strain ATCC 27329 / DSM 1819 / JCM 2831 / NBRC 15690 / NCIMB 10815 / 0-1)).